The primary structure comprises 264 residues: Acyl-[acyl-carrier-protein]--UDP-N-acetylglucosamine O-acyltransferase (264 aa).

Belongs to the transferase hexapeptide repeat family. LpxA subfamily. In terms of assembly, homotrimer.

Its subcellular location is the cytoplasm. The enzyme catalyses a (3R)-hydroxyacyl-[ACP] + UDP-N-acetyl-alpha-D-glucosamine = a UDP-3-O-[(3R)-3-hydroxyacyl]-N-acetyl-alpha-D-glucosamine + holo-[ACP]. The protein operates within glycolipid biosynthesis; lipid IV(A) biosynthesis; lipid IV(A) from (3R)-3-hydroxytetradecanoyl-[acyl-carrier-protein] and UDP-N-acetyl-alpha-D-glucosamine: step 1/6. Its function is as follows. Involved in the biosynthesis of lipid A, a phosphorylated glycolipid that anchors the lipopolysaccharide to the outer membrane of the cell. The chain is Acyl-[acyl-carrier-protein]--UDP-N-acetylglucosamine O-acyltransferase from Rickettsia conorii (strain ATCC VR-613 / Malish 7).